Consider the following 467-residue polypeptide: Acid phosphatase PHO12 (467 aa).

The N-terminal stretch at 1–17 (MLKSAVYSILAASLVNA) is a signal peptide. The active-site Nucleophile is histidine 75. 5 N-linked (GlcNAc...) asparagine glycosylation sites follow: asparagine 97, asparagine 162, asparagine 192, asparagine 250, and asparagine 315. Residue aspartate 338 is the Proton donor of the active site. N-linked (GlcNAc...) asparagine glycans are attached at residues asparagine 356, asparagine 390, asparagine 439, asparagine 445, and asparagine 461.

The protein belongs to the histidine acid phosphatase family. In terms of processing, glycosylated during secretion across the membrane.

The catalysed reaction is a phosphate monoester + H2O = an alcohol + phosphate. The sequence is that of Acid phosphatase PHO12 (PHO12) from Saccharomyces cerevisiae (strain ATCC 204508 / S288c) (Baker's yeast).